The primary structure comprises 338 residues: Glyceraldehyde-3-phosphate dehydrogenase (338 aa).

Residues 12-13, D34, and R79 each bind NAD(+); that span reads RI. Residues 150 to 152, T181, 210 to 211, and R233 each bind D-glyceraldehyde 3-phosphate; these read SCT and TG. C151 serves as the catalytic Nucleophile. Residue N316 coordinates NAD(+).

This sequence belongs to the glyceraldehyde-3-phosphate dehydrogenase family. As to quaternary structure, homotetramer.

It localises to the cytoplasm. The enzyme catalyses D-glyceraldehyde 3-phosphate + phosphate + NAD(+) = (2R)-3-phospho-glyceroyl phosphate + NADH + H(+). It participates in carbohydrate degradation; glycolysis; pyruvate from D-glyceraldehyde 3-phosphate: step 1/5. This chain is Glyceraldehyde-3-phosphate dehydrogenase (GPD), found in Yarrowia lipolytica (strain CLIB 122 / E 150) (Yeast).